Consider the following 105-residue polypeptide: Vacuolar ATPase assembly integral membrane protein VMA21 homolog (105 aa).

Residues 1–26 form a disordered region; that stretch reads MSTKNKKAAGGNGVAPKQTRQQSHDS. Residues 1–36 are Cytoplasmic-facing; that stretch reads MSTKNKKAAGGNGVAPKQTRQQSHDSQDYSSFKTVL. A helical transmembrane segment spans residues 37–57; that stretch reads FYCMLIVFLPVLTFFVLKGFV. The Lumenal segment spans residues 58 to 68; that stretch reads LDQFLDISEVK. Residues 69–89 traverse the membrane as a helical segment; the sequence is VNIASAVGAVVALHIALGLYI. Over 90 to 105 the chain is Cytoplasmic; the sequence is YRAYFGAPGSKGSKTD.

The protein belongs to the VMA21 family.

The protein resides in the endoplasmic reticulum membrane. It is found in the endoplasmic reticulum-Golgi intermediate compartment membrane. It localises to the cytoplasmic vesicle. The protein localises to the COPII-coated vesicle membrane. Its function is as follows. Required for the assembly of the V0 complex of the vacuolar ATPase (V-ATPase) in the endoplasmic reticulum. In Drosophila melanogaster (Fruit fly), this protein is Vacuolar ATPase assembly integral membrane protein VMA21 homolog.